The chain runs to 373 residues: Putative citrate synthase 2 (373 aa).

Active-site residues include H250 and E303.

The protein belongs to the citrate synthase family.

The catalysed reaction is oxaloacetate + acetyl-CoA + H2O = citrate + CoA + H(+). Its pathway is carbohydrate metabolism; tricarboxylic acid cycle; isocitrate from oxaloacetate: step 1/2. The chain is Putative citrate synthase 2 (citA) from Mycobacterium bovis (strain ATCC BAA-935 / AF2122/97).